Consider the following 154-residue polypeptide: Cyanate hydratase (154 aa).

Catalysis depends on residues Arg100, Glu103, and Ser126.

The protein belongs to the cyanase family.

It carries out the reaction cyanate + hydrogencarbonate + 3 H(+) = NH4(+) + 2 CO2. Catalyzes the reaction of cyanate with bicarbonate to produce ammonia and carbon dioxide. The chain is Cyanate hydratase from Aspergillus fumigatus (strain CBS 144.89 / FGSC A1163 / CEA10) (Neosartorya fumigata).